The following is a 1322-amino-acid chain: Transcription elongation factor SPT6-like (1322 aa).

Positions methionine 1–asparagine 17 are enriched in basic and acidic residues. 2 disordered regions span residues methionine 1–glutamate 65 and lysine 90–histidine 113. Residues arginine 18–aspartate 33 are compositionally biased toward acidic residues. Residues glutamate 48–glutamate 65 are compositionally biased toward basic and acidic residues. The segment covering glutamate 97–aspartate 110 has biased composition (acidic residues). In terms of domain architecture, S1 motif spans glycine 1017 to lysine 1088.

Belongs to the SPT6 family.

It is found in the nucleus. Its function is as follows. Transcription elongation factor that enhances the transcription elongation by RNA polymerase II (RNAPII). This Arabidopsis thaliana (Mouse-ear cress) protein is Transcription elongation factor SPT6-like.